We begin with the raw amino-acid sequence, 273 residues long: Bis(5'-nucleosyl)-tetraphosphatase, symmetrical (273 aa).

The protein belongs to the Ap4A hydrolase family.

It carries out the reaction P(1),P(4)-bis(5'-adenosyl) tetraphosphate + H2O = 2 ADP + 2 H(+). Its function is as follows. Hydrolyzes diadenosine 5',5'''-P1,P4-tetraphosphate to yield ADP. The protein is Bis(5'-nucleosyl)-tetraphosphatase, symmetrical of Histophilus somni (strain 2336) (Haemophilus somnus).